We begin with the raw amino-acid sequence, 465 residues long: Phosphatidylserine synthase 1 (465 aa).

At 1 to 35 the chain is on the cytoplasmic side; it reads MVSAMRSRTLSKDDVNYKMHFRMINEQQVEDITID. The helical transmembrane segment at 36–56 threads the bilayer; that stretch reads FFYKPHTITLLTFTTVSLMYF. Over 57–68 the chain is Lumenal; sequence AFTRENTSQEDN. Residues 69 to 89 traverse the membrane as a helical segment; the sequence is IWKGILSVIFFFLIISVLAFP. Over 90–102 the chain is Cytoplasmic; sequence NGPFTRPHPAIWR. Residues 103–123 traverse the membrane as a helical segment; sequence MVFGLSVLYFLFLVFLLFLNV. The Lumenal segment spans residues 124–186; it reads EQVKAVMYWL…AMKALLIRSY (63 aa). A helical transmembrane segment spans residues 187–207; the sequence is GLCWTISITWEMTELFFMHLL. The Cytoplasmic segment spans residues 208-216; the sequence is PNFAECWWD. Residues 217-237 form a helical membrane-spanning segment; it reads QVILDILLCNGGGILLGMVVC. Residues 238–286 are Lumenal-facing; it reads RFLEMRTYHWASFKDIHTTTGKIKRAVLQFTPASWIYVRWFDPKSSFQR. A helical membrane pass occupies residues 287–307; sequence VAGVYLFMIIWQLTELNTFFL. The Cytoplasmic segment spans residues 308–319; that stretch reads KHIFVFQASHPL. Residues 320-342 traverse the membrane as a helical segment; it reads SWCRILFIGIITAPTVRQYYAYL. At 343-355 the chain is on the lumenal side; it reads TDTQCKRVGTQCW. Residues 356 to 376 form a helical membrane-spanning segment; sequence VFGAIAFLEATVCIKFGQDLF. Topologically, residues 377–383 are cytoplasmic; sequence SKTHLLY. Residues 384-404 form a helical membrane-spanning segment; that stretch reads VFLWLFSVAVITFLCLYGMVW. At 405-465 the chain is on the lumenal side; the sequence is YADYCGQREK…GKVTNGVGKK (61 aa). The segment at 440–465 is disordered; it reads PVKQNEGTSRRKNRHKGKVTNGVGKK. Residues 449 to 465 are compositionally biased toward basic residues; the sequence is RRKNRHKGKVTNGVGKK.

It belongs to the phosphatidyl serine synthase family.

Its subcellular location is the endoplasmic reticulum membrane. The catalysed reaction is a 1,2-diacyl-sn-glycero-3-phosphoethanolamine + L-serine = a 1,2-diacyl-sn-glycero-3-phospho-L-serine + ethanolamine. It catalyses the reaction a 1,2-diacyl-sn-glycero-3-phosphocholine + L-serine = a 1,2-diacyl-sn-glycero-3-phospho-L-serine + choline. The protein operates within phospholipid metabolism; phosphatidylserine biosynthesis. In terms of biological role, catalyzes a base-exchange reaction in which the polar head group of phosphatidylethanolamine (PE) or phosphatidylcholine (PC) is replaced by L-serine. Catalyzes mainly the conversion of phosphatidylcholine but also converts, in vitro and to a lesser extent, phosphatidylethanolamine. The sequence is that of Phosphatidylserine synthase 1 (ptdss1) from Xenopus tropicalis (Western clawed frog).